A 348-amino-acid polypeptide reads, in one-letter code: Isopentenyl-diphosphate delta-isomerase (348 aa).

Position 9 to 10 (9 to 10 (RK)) interacts with substrate. FMN is bound by residues 68–70 (AMT), Ser-98, and Asn-127. A substrate-binding site is contributed by Gln-157. Glu-158 serves as a coordination point for Mg(2+). FMN is bound by residues Lys-188, Ser-213, Thr-218, and 286-287 (AG).

Belongs to the IPP isomerase type 2 family. Homooctamer. Dimer of tetramers. The cofactor is FMN. Requires NADPH as cofactor. It depends on Mg(2+) as a cofactor.

The protein resides in the cytoplasm. It carries out the reaction isopentenyl diphosphate = dimethylallyl diphosphate. In terms of biological role, involved in the biosynthesis of isoprenoids. Catalyzes the 1,3-allylic rearrangement of the homoallylic substrate isopentenyl (IPP) to its allylic isomer, dimethylallyl diphosphate (DMAPP). This Limosilactobacillus reuteri subsp. reuteri (strain JCM 1112) (Lactobacillus reuteri) protein is Isopentenyl-diphosphate delta-isomerase.